The following is a 734-amino-acid chain: 1,4-alpha-glucan branching enzyme GlgB (734 aa).

Asp-414 functions as the Nucleophile in the catalytic mechanism. The active-site Proton donor is Glu-467.

The protein belongs to the glycosyl hydrolase 13 family. GlgB subfamily. In terms of assembly, monomer.

The enzyme catalyses Transfers a segment of a (1-&gt;4)-alpha-D-glucan chain to a primary hydroxy group in a similar glucan chain.. It participates in glycan biosynthesis; glycogen biosynthesis. In terms of biological role, catalyzes the formation of the alpha-1,6-glucosidic linkages in glycogen by scission of a 1,4-alpha-linked oligosaccharide from growing alpha-1,4-glucan chains and the subsequent attachment of the oligosaccharide to the alpha-1,6 position. The sequence is that of 1,4-alpha-glucan branching enzyme GlgB from Myxococcus xanthus (strain DK1622).